Consider the following 282-residue polypeptide: 4-hydroxybenzoate octaprenyltransferase (282 aa).

Transmembrane regions (helical) follow at residues 17–37 (IGIL…NQGF), 40–60 (IDLL…GCVI), 90–110 (AFIL…KLPI), 113–133 (FYFA…KRFL), 135–155 (APQL…FIAS), 163–183 (FIVL…MYAM), 207–227 (LIIA…AINK), 231–251 (WFFY…LKLI), and 262–282 (AFLV…LALI).

It belongs to the UbiA prenyltransferase family. Mg(2+) serves as cofactor.

The protein resides in the cell inner membrane. It catalyses the reaction all-trans-octaprenyl diphosphate + 4-hydroxybenzoate = 4-hydroxy-3-(all-trans-octaprenyl)benzoate + diphosphate. Its pathway is cofactor biosynthesis; ubiquinone biosynthesis. Functionally, catalyzes the prenylation of para-hydroxybenzoate (PHB) with an all-trans polyprenyl group. Mediates the second step in the final reaction sequence of ubiquinone-8 (UQ-8) biosynthesis, which is the condensation of the polyisoprenoid side chain with PHB, generating the first membrane-bound Q intermediate 3-octaprenyl-4-hydroxybenzoate. This is 4-hydroxybenzoate octaprenyltransferase from Legionella pneumophila subsp. pneumophila (strain Philadelphia 1 / ATCC 33152 / DSM 7513).